We begin with the raw amino-acid sequence, 519 residues long: 2-isopropylmalate synthase (519 aa).

In terms of domain architecture, Pyruvate carboxyltransferase spans 12 to 274; it reads VVIFDTTLRD…WCNVESTTLT (263 aa). 4 residues coordinate Mn(2+): D21, H209, H211, and N245. The interval 398-519 is regulatory domain; that stretch reads RLVSLTVIAG…QREAPVAAAS (122 aa).

This sequence belongs to the alpha-IPM synthase/homocitrate synthase family. LeuA type 1 subfamily. Homodimer. Mn(2+) is required as a cofactor.

It localises to the cytoplasm. It catalyses the reaction 3-methyl-2-oxobutanoate + acetyl-CoA + H2O = (2S)-2-isopropylmalate + CoA + H(+). The protein operates within amino-acid biosynthesis; L-leucine biosynthesis; L-leucine from 3-methyl-2-oxobutanoate: step 1/4. Catalyzes the condensation of the acetyl group of acetyl-CoA with 3-methyl-2-oxobutanoate (2-ketoisovalerate) to form 3-carboxy-3-hydroxy-4-methylpentanoate (2-isopropylmalate). This Afipia carboxidovorans (strain ATCC 49405 / DSM 1227 / KCTC 32145 / OM5) (Oligotropha carboxidovorans) protein is 2-isopropylmalate synthase.